The sequence spans 205 residues: CASP-like protein 0U1 (205 aa).

The Cytoplasmic portion of the chain corresponds to 1 to 38 (MDDAPGASDEAREPLLKRVGASVEGTSLMNHRLMKNPK). Residues 39–57 (FRALLVESLMALTTFSFMA) traverse the membrane as a helical segment. Residues 58-89 (KQTEGLAGPELSTLNDCGEAGCGFTKFYQFKG) are Extracellular-facing. The helical transmembrane segment at 90-110 (VVGVYAGFWAYTVILIAMYVI) threads the bilayer. At 111 to 124 (RKAPPPGTEFASYA) the chain is on the cytoplasmic side. Residues 125–145 (LFTAAMATFVVMSITECASVV) traverse the membrane as a helical segment. Over 146-159 (LSSDYYVCKNADYS) the chain is Extracellular. A helical transmembrane segment spans residues 160–180 (LVSLIFAAATIVLNCLTCAFA). The Cytoplasmic portion of the chain corresponds to 181 to 205 (WRQWGELKFVGLPKTLSALTETYPG).

This sequence belongs to the Casparian strip membrane proteins (CASP) family. Homodimer and heterodimers.

It is found in the cell membrane. This Ostreococcus lucimarinus (strain CCE9901) protein is CASP-like protein 0U1.